Consider the following 218-residue polypeptide: Cytochrome b6 (218 aa).

A helical transmembrane segment spans residues 35–55 (IFYCLGGITLVCFLIQFATGF). Position 38 (cysteine 38) interacts with heme c. Residues histidine 89 and histidine 103 each coordinate heme b. 3 helical membrane-spanning segments follow: residues 93-113 (ASMM…TGGF), 119-139 (LTWV…VTGY), and 189-209 (LHTF…FLMI). Heme b contacts are provided by histidine 190 and histidine 205.

The protein belongs to the cytochrome b family. PetB subfamily. The 4 large subunits of the cytochrome b6-f complex are cytochrome b6, subunit IV (17 kDa polypeptide, PetD), cytochrome f and the Rieske protein, while the 4 small subunits are PetG, PetL, PetM and PetN. The complex functions as a dimer. Requires heme b as cofactor. Heme c serves as cofactor.

It localises to the cellular thylakoid membrane. Component of the cytochrome b6-f complex, which mediates electron transfer between photosystem II (PSII) and photosystem I (PSI), cyclic electron flow around PSI, and state transitions. The sequence is that of Cytochrome b6 from Prochlorococcus marinus (strain MIT 9211).